Here is a 342-residue protein sequence, read N- to C-terminus: tRNA N6-adenosine threonylcarbamoyltransferase (342 aa).

2 residues coordinate Fe cation: His-111 and His-115. Substrate-binding positions include 134-138 (LVSGG), Asp-167, Gly-180, Asp-184, and Asn-273. Asp-298 lines the Fe cation pocket.

This sequence belongs to the KAE1 / TsaD family. Fe(2+) serves as cofactor.

It is found in the cytoplasm. It catalyses the reaction L-threonylcarbamoyladenylate + adenosine(37) in tRNA = N(6)-L-threonylcarbamoyladenosine(37) in tRNA + AMP + H(+). Its function is as follows. Required for the formation of a threonylcarbamoyl group on adenosine at position 37 (t(6)A37) in tRNAs that read codons beginning with adenine. Is involved in the transfer of the threonylcarbamoyl moiety of threonylcarbamoyl-AMP (TC-AMP) to the N6 group of A37, together with TsaE and TsaB. TsaD likely plays a direct catalytic role in this reaction. This is tRNA N6-adenosine threonylcarbamoyltransferase from Gloeobacter violaceus (strain ATCC 29082 / PCC 7421).